Consider the following 702-residue polypeptide: Ribosomal RNA large subunit methyltransferase K/L (702 aa).

The THUMP domain maps to 43-154 (LVYQSLMWSR…KETASIALDL (112 aa)).

Belongs to the methyltransferase superfamily. RlmKL family.

Its subcellular location is the cytoplasm. The catalysed reaction is guanosine(2445) in 23S rRNA + S-adenosyl-L-methionine = N(2)-methylguanosine(2445) in 23S rRNA + S-adenosyl-L-homocysteine + H(+). It catalyses the reaction guanosine(2069) in 23S rRNA + S-adenosyl-L-methionine = N(2)-methylguanosine(2069) in 23S rRNA + S-adenosyl-L-homocysteine + H(+). Functionally, specifically methylates the guanine in position 2445 (m2G2445) and the guanine in position 2069 (m7G2069) of 23S rRNA. This Escherichia coli O6:H1 (strain CFT073 / ATCC 700928 / UPEC) protein is Ribosomal RNA large subunit methyltransferase K/L.